The following is a 128-amino-acid chain: Small ribosomal subunit protein uS11 (128 aa).

It belongs to the universal ribosomal protein uS11 family. Part of the 30S ribosomal subunit. Interacts with proteins S7 and S18. Binds to IF-3.

Its function is as follows. Located on the platform of the 30S subunit, it bridges several disparate RNA helices of the 16S rRNA. Forms part of the Shine-Dalgarno cleft in the 70S ribosome. The chain is Small ribosomal subunit protein uS11 from Leuconostoc mesenteroides subsp. mesenteroides (strain ATCC 8293 / DSM 20343 / BCRC 11652 / CCM 1803 / JCM 6124 / NCDO 523 / NBRC 100496 / NCIMB 8023 / NCTC 12954 / NRRL B-1118 / 37Y).